Reading from the N-terminus, the 923-residue chain is Alanine--tRNA ligase (923 aa).

Zn(2+) is bound by residues His-611, His-615, Cys-714, and His-718. Gly residues predominate over residues 886–903 (VGGGGGGRPNMARGGGTD). The segment at 886-909 (VGGGGGGRPNMARGGGTDPSGMDN) is disordered.

This sequence belongs to the class-II aminoacyl-tRNA synthetase family. Zn(2+) is required as a cofactor.

It is found in the cytoplasm. It carries out the reaction tRNA(Ala) + L-alanine + ATP = L-alanyl-tRNA(Ala) + AMP + diphosphate. Catalyzes the attachment of alanine to tRNA(Ala) in a two-step reaction: alanine is first activated by ATP to form Ala-AMP and then transferred to the acceptor end of tRNA(Ala). Also edits incorrectly charged Ser-tRNA(Ala) and Gly-tRNA(Ala) via its editing domain. The protein is Alanine--tRNA ligase of Methanococcoides burtonii (strain DSM 6242 / NBRC 107633 / OCM 468 / ACE-M).